The following is an 855-amino-acid chain: Leucine--tRNA ligase (855 aa).

Positions 42–52 (PYPSGSLHVGH) match the 'HIGH' region motif. A disordered region spans residues 292–311 (SEMDRTAEDKPKKGIPTGGK). A compositionally biased stretch (basic and acidic residues) spans 293–303 (EMDRTAEDKPK). The short motif at 614–618 (KMSKS) is the 'KMSKS' region element. Lys617 is a binding site for ATP.

The protein belongs to the class-I aminoacyl-tRNA synthetase family.

The protein resides in the cytoplasm. It carries out the reaction tRNA(Leu) + L-leucine + ATP = L-leucyl-tRNA(Leu) + AMP + diphosphate. This is Leucine--tRNA ligase from Acaryochloris marina (strain MBIC 11017).